A 264-amino-acid polypeptide reads, in one-letter code: tRNA pseudouridine synthase A (264 aa).

The active-site Nucleophile is aspartate 51. A substrate-binding site is contributed by tyrosine 109.

It belongs to the tRNA pseudouridine synthase TruA family. Homodimer.

It catalyses the reaction uridine(38/39/40) in tRNA = pseudouridine(38/39/40) in tRNA. In terms of biological role, formation of pseudouridine at positions 38, 39 and 40 in the anticodon stem and loop of transfer RNAs. In Photorhabdus laumondii subsp. laumondii (strain DSM 15139 / CIP 105565 / TT01) (Photorhabdus luminescens subsp. laumondii), this protein is tRNA pseudouridine synthase A.